The primary structure comprises 347 residues: Fused nickel transport protein NikMN (347 aa).

The next 9 membrane-spanning stretches (helical) occupy residues 6-26 (GYLS…FWYV), 40-60 (LPLV…NLPI), 73-93 (IAAV…ALLI), 96-116 (IFFG…MAVV), 140-160 (VIMA…LAAV), 185-205 (VAVP…EFIV), 236-256 (LWAG…AAGT), 273-293 (AAMA…GGFA), and 319-339 (VLSA…SAGL).

Belongs to the CbiM family. NikM subfamily. As to quaternary structure, forms an energy-coupling factor (ECF) transporter complex composed of an ATP-binding protein (A component, NikO), a transmembrane protein (T component, NikQ) and a fused possible substrate-capture protein (S component, NikMN) of unknown stoichimetry.

Its subcellular location is the cell inner membrane. Part of the energy-coupling factor (ECF) transporter complex NikMNQO involved in nickel import. The complex confers nickel uptake upon expression in E.coli; can also transport cobalt with a very low affinity. This chain is Fused nickel transport protein NikMN (nikMN), found in Rhodobacter capsulatus (strain ATCC BAA-309 / NBRC 16581 / SB1003).